The following is a 1018-amino-acid chain: Thrombospondin type-1 domain-containing protein 4 (1018 aa).

The first 25 residues, 1-25, serve as a signal peptide directing secretion; it reads MVSHFMGSLSVLCFLLLLGFQFVCP. A TSP type-1 1 domain is found at 53–307; that stretch reads PGVWGAWGPW…YKLCNTNVCP (255 aa). Disordered stretches follow at residues 111–235, 254–279, and 534–623; these read SVPL…RSGL, PAAS…ATQS, and SPQV…NWKQ. The span at 187 to 200 shows a compositional bias: basic residues; that stretch reads QRLRRQKLSSRHSR. A compositionally biased stretch (low complexity) spans 201–210; it reads SQGASSARHG. Residues 259–279 are compositionally biased toward polar residues; that stretch reads LFHSPETSNNHGVGTHGATQS. 2 stretches are compositionally biased toward basic and acidic residues: residues 556-577 and 592-603; these read RSQE…RGEA and RHPDRFSPHRPD. 5 TSP type-1 domains span residues 676 to 737, 739 to 792, 793 to 851, 852 to 911, and 912 to 968; these read CPAF…KICS, WQIR…DMGP, CAKS…GPCT, GKVE…HLKP, and CGAK…QDCV. The 38-residue stretch at 971-1008 folds into the PLAC domain; it reads VDENCKDKYYNCNVVVQARLCVYNYYKTACCASCTRVA.

As to quaternary structure, interacts with FBN1. May interact with TGFB1.

Its subcellular location is the secreted. The protein localises to the extracellular space. The protein resides in the extracellular matrix. Promotes FBN1 matrix assembly. Attenuates TGFB signaling, possibly by accelerating the sequestration of large latent complexes of TGFB or active TGFB by FBN1 microfibril assembly, thereby negatively regulating the expression of TGFB regulatory targets, such as POSTN. The sequence is that of Thrombospondin type-1 domain-containing protein 4 (THSD4) from Homo sapiens (Human).